We begin with the raw amino-acid sequence, 1049 residues long: Ataxin-2-like protein (1049 aa).

An N-acetylmethionine modification is found at Met-1. The disordered stretch occupies residues 1–54 (MLKPQPPQQTSQPQQPPPTQQAVARRSPGGTSPPNGGLPGPLTATAAPPGPPAA). The residue at position 27 (Ser-27) is a Phosphoserine. A Phosphothreonine modification is found at Thr-45. Positions 96–119 (SVRGQTTGKGPPQSPVFEGVYNNS) are interaction with MPL. Phosphoserine is present on Ser-109. Phosphotyrosine is present on Tyr-116. Residues 120 to 197 (RMLHFLTAVV…VLLVHFRNVD (78 aa)) enclose the Sm domain. Lys-205 bears the N6-acetyllysine mark. Ser-236 is subject to Phosphoserine. Residue Tyr-262 is modified to Phosphotyrosine. The residue at position 304 (Ser-304) is a Phosphoserine. At Tyr-307 the chain carries Phosphotyrosine. The span at 314–326 (ENDDGRTEEEKHS) shows a compositional bias: basic and acidic residues. Disordered stretches follow at residues 314–522 (ENDD…RNLE), 554–573 (QFKLQPSSSPETGLDPFPSR), 578–704 (EAKG…LTAG), 736–772 (VSNSVPGQQGKYRGAKGSLPPQRSDQHQPASAPPMMQ), 824–852 (SNPRMLTSGSHPQAIVSSSTPQYPAAEQP), 868–944 (HATQ…SSFP), and 999–1049 (PQGH…PPGN). A compositionally biased stretch (polar residues) spans 328–340 (VQRQGSGRESPSL). Phosphoserine is present on residues Ser-333 and Ser-337. Lys-346 participates in a covalent cross-link: Glycyl lysine isopeptide (Lys-Gly) (interchain with G-Cter in SUMO2). Tyr-347 carries the post-translational modification Phosphotyrosine. The residue at position 359 (Arg-359) is an Asymmetric dimethylarginine. Over residues 361-378 (GVRCSSSRGGRPGLSSLP) the composition is skewed to low complexity. Phosphoserine is present on residues Ser-389, Ser-407, and Ser-453. A compositionally biased stretch (low complexity) spans 454–466 (PKSAAPAPVSASC). The span at 475 to 487 (VASSASIPVTSSV) shows a compositional bias: polar residues. Residues Ser-496 and Ser-499 each carry the phosphoserine modification. Residues 508 to 519 (DVKELPTKEPSR) are compositionally biased toward basic and acidic residues. A phosphoserine mark is found at Ser-560, Ser-561, and Ser-562. Basic and acidic residues predominate over residues 578–587 (EAKGKEKEVD). At Ser-597 the chain carries Phosphoserine. Position 635 is a phosphothreonine (Thr-635). 4 positions are modified to phosphoserine: Ser-637, Ser-677, Ser-683, and Ser-687. Over residues 681 to 697 (STSTPTSPGPRTHSTPS) the composition is skewed to low complexity. Composition is skewed to polar residues over residues 824 to 845 (SNPRMLTSGSHPQAIVSSSTPQ) and 878 to 902 (QPATTPTGSQPQSQHAAPSPVQHQA). Low complexity predominate over residues 935–944 (SAQSPQSSFP). The span at 1033–1042 (QVQSHPSQQL) shows a compositional bias: polar residues.

The protein belongs to the ataxin-2 family. Interacts with MPL/TPOR and EPOR and dissociates after ligand stimulation. Interacts with DDX6, G3BP, and ATXN2. Interacts with PRMT1. Interacts with CIC and ATXN1. In terms of processing, thrombopoietin triggers the phosphorylation on tyrosine residues in a way that is dependent on MPL C-terminal domain. Post-translationally, asymmetrically dimethylated. Probably methylated by PRMT1. In terms of tissue distribution, expressed in cerebellum.

The protein resides in the membrane. Its subcellular location is the cytoplasm. The protein localises to the nucleus speckle. It localises to the cytoplasmic granule. In terms of biological role, involved in the regulation of stress granule and P-body formation. The protein is Ataxin-2-like protein (Atxn2l) of Mus musculus (Mouse).